The primary structure comprises 67 residues: MMPGPFELIVILVIVLLLFGGKRLKNVGSDLGNAIKGFKKSMQKEPADQINTKDNIVEAKTTKESTK.

Residues 1–21 (MMPGPFELIVILVIVLLLFGG) form a helical membrane-spanning segment.

Belongs to the TatA/E family. As to quaternary structure, the Tat system comprises two distinct complexes: a TatABC complex, containing multiple copies of TatA, TatB and TatC subunits, and a separate TatA complex, containing only TatA subunits. Substrates initially bind to the TatABC complex, which probably triggers association of the separate TatA complex to form the active translocon.

The protein resides in the cell inner membrane. In terms of biological role, part of the twin-arginine translocation (Tat) system that transports large folded proteins containing a characteristic twin-arginine motif in their signal peptide across membranes. TatA could form the protein-conducting channel of the Tat system. This is Sec-independent protein translocase protein TatA from Ruthia magnifica subsp. Calyptogena magnifica.